The chain runs to 245 residues: tRNA1(Val) (adenine(37)-N6)-methyltransferase (245 aa).

Belongs to the methyltransferase superfamily. tRNA (adenine-N(6)-)-methyltransferase family.

The protein localises to the cytoplasm. It carries out the reaction adenosine(37) in tRNA1(Val) + S-adenosyl-L-methionine = N(6)-methyladenosine(37) in tRNA1(Val) + S-adenosyl-L-homocysteine + H(+). In terms of biological role, specifically methylates the adenine in position 37 of tRNA(1)(Val) (anticodon cmo5UAC). The chain is tRNA1(Val) (adenine(37)-N6)-methyltransferase from Erwinia tasmaniensis (strain DSM 17950 / CFBP 7177 / CIP 109463 / NCPPB 4357 / Et1/99).